The chain runs to 278 residues: 3-methyl-2-oxobutanoate hydroxymethyltransferase (278 aa).

The Mg(2+) site is built by Asp43 and Asp82. 3-methyl-2-oxobutanoate-binding positions include 43-44 (DS), Asp82, and Lys112. Glu114 is a Mg(2+) binding site. Glu181 functions as the Proton acceptor in the catalytic mechanism.

This sequence belongs to the PanB family. As to quaternary structure, homodecamer; pentamer of dimers. It depends on Mg(2+) as a cofactor.

It localises to the cytoplasm. It catalyses the reaction 3-methyl-2-oxobutanoate + (6R)-5,10-methylene-5,6,7,8-tetrahydrofolate + H2O = 2-dehydropantoate + (6S)-5,6,7,8-tetrahydrofolate. It functions in the pathway cofactor biosynthesis; (R)-pantothenate biosynthesis; (R)-pantoate from 3-methyl-2-oxobutanoate: step 1/2. Its function is as follows. Catalyzes the reversible reaction in which hydroxymethyl group from 5,10-methylenetetrahydrofolate is transferred onto alpha-ketoisovalerate to form ketopantoate. In Bacillus cereus (strain ATCC 14579 / DSM 31 / CCUG 7414 / JCM 2152 / NBRC 15305 / NCIMB 9373 / NCTC 2599 / NRRL B-3711), this protein is 3-methyl-2-oxobutanoate hydroxymethyltransferase.